The following is a 344-amino-acid chain: Succinylglutamate desuccinylase (344 aa).

Zn(2+) is bound by residues histidine 63, glutamate 66, and histidine 160. The active site involves glutamate 224.

Belongs to the AspA/AstE family. Succinylglutamate desuccinylase subfamily. The cofactor is Zn(2+).

The catalysed reaction is N-succinyl-L-glutamate + H2O = L-glutamate + succinate. It participates in amino-acid degradation; L-arginine degradation via AST pathway; L-glutamate and succinate from L-arginine: step 5/5. Its function is as follows. Transforms N(2)-succinylglutamate into succinate and glutamate. The polypeptide is Succinylglutamate desuccinylase (Shewanella sp. (strain W3-18-1)).